Consider the following 146-residue polypeptide: Large ribosomal subunit protein uL15x (146 aa).

Composition is skewed to basic residues over residues 1–14 and 21–30; these read MTTRFKKNRKKRGH and RIGKHRKHPG. The tract at residues 1–35 is disordered; sequence MTTRFKKNRKKRGHVSAGHGRIGKHRKHPGGRGNA.

It belongs to the universal ribosomal protein uL15 family.

The chain is Large ribosomal subunit protein uL15x (RPL27AC) from Arabidopsis thaliana (Mouse-ear cress).